The chain runs to 267 residues: Type III pantothenate kinase (267 aa).

Residue 6-13 (DSGNSRLK) coordinates ATP. Residues tyrosine 96 and 103-106 (GADR) contribute to the substrate site. The active-site Proton acceptor is the aspartate 105. An ATP-binding site is contributed by threonine 131. Threonine 181 provides a ligand contact to substrate.

Belongs to the type III pantothenate kinase family. In terms of assembly, homodimer. Requires NH4(+) as cofactor. K(+) serves as cofactor.

The protein localises to the cytoplasm. It carries out the reaction (R)-pantothenate + ATP = (R)-4'-phosphopantothenate + ADP + H(+). It participates in cofactor biosynthesis; coenzyme A biosynthesis; CoA from (R)-pantothenate: step 1/5. In terms of biological role, catalyzes the phosphorylation of pantothenate (Pan), the first step in CoA biosynthesis. This chain is Type III pantothenate kinase, found in Bordetella bronchiseptica (strain ATCC BAA-588 / NCTC 13252 / RB50) (Alcaligenes bronchisepticus).